A 304-amino-acid polypeptide reads, in one-letter code: Bifunctional protein FolD (304 aa).

Residues glycine 176–serine 178, isoleucine 201, and isoleucine 242 each bind NADP(+).

The protein belongs to the tetrahydrofolate dehydrogenase/cyclohydrolase family. In terms of assembly, homodimer.

It carries out the reaction (6R)-5,10-methylene-5,6,7,8-tetrahydrofolate + NADP(+) = (6R)-5,10-methenyltetrahydrofolate + NADPH. The catalysed reaction is (6R)-5,10-methenyltetrahydrofolate + H2O = (6R)-10-formyltetrahydrofolate + H(+). The protein operates within one-carbon metabolism; tetrahydrofolate interconversion. In terms of biological role, catalyzes the oxidation of 5,10-methylenetetrahydrofolate to 5,10-methenyltetrahydrofolate and then the hydrolysis of 5,10-methenyltetrahydrofolate to 10-formyltetrahydrofolate. This chain is Bifunctional protein FolD, found in Gluconobacter oxydans (strain 621H) (Gluconobacter suboxydans).